Here is a 215-residue protein sequence, read N- to C-terminus: Ras-related protein Rab-14 (215 aa).

Ala2 is modified (N-acetylalanine). GTP contacts are provided by Gly21, Val22, Gly23, Lys24, Ser25, Cys26, Ala38, Asp39, Cys40, His42, and Thr43. Mg(2+) is bound at residue Ser25. Positions 42-47 (HTIGVE) match the Switch 1 motif. Mg(2+)-binding residues include Thr43 and Asp66. The Switch 2 motif lies at 68-77 (AGQERFRAVT). Residues Gly69, Asn124, Lys125, Asp127, Ala155, and Lys156 each coordinate GTP. Positions 188 to 215 (SGVQHKPSAPQGGRLTSEPQPQREGCGC) are disordered. Residues Cys213 and Cys215 are each lipidated (S-geranylgeranyl cysteine). Cys215 carries the post-translational modification Cysteine methyl ester.

It belongs to the small GTPase superfamily. Rab family. Requires Mg(2+) as cofactor.

The protein localises to the recycling endosome. It localises to the early endosome membrane. The protein resides in the golgi apparatus membrane. It is found in the golgi apparatus. Its subcellular location is the trans-Golgi network membrane. The protein localises to the cytoplasmic vesicle. It localises to the phagosome. The enzyme catalyses GTP + H2O = GDP + phosphate + H(+). Its activity is regulated as follows. Regulated by guanine nucleotide exchange factors (GEFs) including DENND6A and DENND6B which promote the exchange of bound GDP for free GTP. Regulated by GTPase activating proteins (GAPs) which increase the GTP hydrolysis activity. Inhibited by GDP dissociation inhibitors (GDIs) which prevent Rab-GDP dissociation. In terms of biological role, the small GTPases Rab are key regulators of intracellular membrane trafficking, from the formation of transport vesicles to their fusion with membranes. Rabs cycle between an inactive GDP-bound form and an active GTP-bound form that is able to recruit to membranes different set of downstream effectors directly responsible for vesicle formation, movement, tethering and fusion. Involved in membrane trafficking between the Golgi complex and endosomes during early embryonic development. Regulates the Golgi to endosome transport of FGFR-containing vesicles during early development, a key process for developing basement membrane and epiblast and primitive endoderm lineages during early postimplantation development. May act by modulating the kinesin KIF16B-cargo association to endosomes. Regulates, together with its guanine nucleotide exchange factor DENND6A, the specific endocytic transport of ADAM10, N-cadherin/CDH2 shedding and cell-cell adhesion. Mediates endosomal tethering and fusion through the interaction with RUFY1 and RAB4B. Interaction with RAB11FIP1 may function in the process of neurite formation. The protein is Ras-related protein Rab-14 (RAB14) of Gallus gallus (Chicken).